Consider the following 286-residue polypeptide: Bifunctional protein FolD (286 aa).

NADP(+)-binding positions include 167–169 (GRS) and Ile233.

Belongs to the tetrahydrofolate dehydrogenase/cyclohydrolase family. As to quaternary structure, homodimer.

It carries out the reaction (6R)-5,10-methylene-5,6,7,8-tetrahydrofolate + NADP(+) = (6R)-5,10-methenyltetrahydrofolate + NADPH. The catalysed reaction is (6R)-5,10-methenyltetrahydrofolate + H2O = (6R)-10-formyltetrahydrofolate + H(+). The protein operates within one-carbon metabolism; tetrahydrofolate interconversion. Its function is as follows. Catalyzes the oxidation of 5,10-methylenetetrahydrofolate to 5,10-methenyltetrahydrofolate and then the hydrolysis of 5,10-methenyltetrahydrofolate to 10-formyltetrahydrofolate. This is Bifunctional protein FolD from Limosilactobacillus reuteri (strain DSM 20016) (Lactobacillus reuteri).